We begin with the raw amino-acid sequence, 470 residues long: L-seryl-tRNA(Sec) selenium transferase (470 aa).

The residue at position 294 (K294) is an N6-(pyridoxal phosphate)lysine.

The protein belongs to the SelA family. Requires pyridoxal 5'-phosphate as cofactor.

It localises to the cytoplasm. It catalyses the reaction L-seryl-tRNA(Sec) + selenophosphate + H(+) = L-selenocysteinyl-tRNA(Sec) + phosphate. The protein operates within aminoacyl-tRNA biosynthesis; selenocysteinyl-tRNA(Sec) biosynthesis; selenocysteinyl-tRNA(Sec) from L-seryl-tRNA(Sec) (bacterial route): step 1/1. In terms of biological role, converts seryl-tRNA(Sec) to selenocysteinyl-tRNA(Sec) required for selenoprotein biosynthesis. The polypeptide is L-seryl-tRNA(Sec) selenium transferase (Solidesulfovibrio magneticus (strain ATCC 700980 / DSM 13731 / RS-1) (Desulfovibrio magneticus)).